A 135-amino-acid chain; its full sequence is Small ribosomal subunit protein eS6 (135 aa).

It belongs to the eukaryotic ribosomal protein eS6 family.

In Methanococcoides burtonii (strain DSM 6242 / NBRC 107633 / OCM 468 / ACE-M), this protein is Small ribosomal subunit protein eS6.